The chain runs to 234 residues: Enolase-phosphatase E1 (234 aa).

Mg(2+) is bound by residues aspartate 13 and glutamate 15. Residues 127–128 (SS) and lysine 164 each bind substrate. Aspartate 191 contributes to the Mg(2+) binding site.

Belongs to the HAD-like hydrolase superfamily. MasA/MtnC family. As to quaternary structure, monomer. Mg(2+) serves as cofactor.

It localises to the cytoplasm. The protein resides in the nucleus. It catalyses the reaction 5-methylsulfanyl-2,3-dioxopentyl phosphate + H2O = 1,2-dihydroxy-5-(methylsulfanyl)pent-1-en-3-one + phosphate. It functions in the pathway amino-acid biosynthesis; L-methionine biosynthesis via salvage pathway; L-methionine from S-methyl-5-thio-alpha-D-ribose 1-phosphate: step 3/6. Its pathway is amino-acid biosynthesis; L-methionine biosynthesis via salvage pathway; L-methionine from S-methyl-5-thio-alpha-D-ribose 1-phosphate: step 4/6. Functionally, bifunctional enzyme that catalyzes the enolization of 2,3-diketo-5-methylthiopentyl-1-phosphate (DK-MTP-1-P) into the intermediate 2-hydroxy-3-keto-5-methylthiopentenyl-1-phosphate (HK-MTPenyl-1-P), which is then dephosphorylated to form the acireductone 1,2-dihydroxy-3-keto-5-methylthiopentene (DHK-MTPene). The sequence is that of Enolase-phosphatase E1 from Podospora anserina (strain S / ATCC MYA-4624 / DSM 980 / FGSC 10383) (Pleurage anserina).